The following is a 281-amino-acid chain: Nucleotide-binding protein PSHAa2554 (281 aa).

Residue 8–15 participates in ATP binding; sequence GRSGSGKS. Residue 56–59 coordinates GTP; it reads DVRN.

It belongs to the RapZ-like family.

Its function is as follows. Displays ATPase and GTPase activities. The polypeptide is Nucleotide-binding protein PSHAa2554 (Pseudoalteromonas translucida (strain TAC 125)).